The sequence spans 31 residues: Phalloidin proprotein (31 aa).

Residues 1–10 (MSDINATRLP) constitute a propeptide that is removed on maturation. Residues 11–17 (AWLATCP) constitute a cross-link (cyclopeptide (Ala-Pro)). Residues 12–16 (WLATC) constitute a cross-link (2'-cysteinyl-6'-hydroxytryptophan sulfoxide (Trp-Cys)). The propeptide occupies 18–31 (CAGDDVNPLLTRGE).

It belongs to the MSDIN fungal toxin family. Post-translationally, processed by the macrocyclase-peptidase enzyme POPB to yield a toxic cyclic heptapeptide. POPB first removes 10 residues from the N-terminus. Conformational trapping of the remaining peptide forces the enzyme to release this intermediate rather than proceed to macrocyclization. The enzyme rebinds the remaining peptide in a different conformation and catalyzes macrocyclization of the N-terminal 7 residues.

Major toxin that belongs to the bicyclic heptapeptides called phallotoxins. Although structurally related to amatoxins, phallotoxins have a different mode of action, which is the stabilization of F-actin. Phallotoxins are poisonous when administered parenterally, but not orally because of poor absorption. The chain is Phalloidin proprotein from Amanita ocreata (Western North American destroying angel).